The following is a 329-amino-acid chain: MMSNSSSEIDVVKTRIPTYDEDDDTILYAYETKPEFVNKEPNIVSDASCNTEEQLKTVNDVLIHCQVIYDAMQNLDKKIDVIRRKVSKIQRFHARFLWANRKRYGYKKHSYRLVKKLKLQKMKKNEVYETFSYPESYSPTLPVSRRENNSPSNLPRPSFCMEEYQRAEPEEDPILSRTLSPVHPSDFSEHNYQPYYASDGAAYGSSSGLCLGNPRADSIHDTYSTDQASAAPPSVTRSPFENDGYIEKGSITKHPSTWSVEAVVLFLKQTDPLALCPLVDLFRSHEIDGKALLLLTSDVLLKHLGVKLGTAVKLCYYIDRLKQGKCFEN.

Residues Ser-138 and Ser-238 each carry the phosphoserine modification. The tract at residues 138 to 157 (SPTLPVSRRENNSPSNLPRP) is disordered. The 68-residue stretch at 258-325 (WSVEAVVLFL…YYIDRLKQGK (68 aa)) folds into the SAM domain.

This sequence belongs to the SCM family.

It is found in the nucleus. In terms of biological role, putative Polycomb group (PcG) protein. PcG proteins act by forming multiprotein complexes, which are required to maintain the transcriptionally repressive state of homeotic genes throughout development. May be involved in spermatogenesis during sexual maturation. In Gorilla gorilla gorilla (Western lowland gorilla), this protein is Sex comb on midleg-like protein 1 (SCML1).